The following is a 354-amino-acid chain: Guanine nucleotide-binding protein G(i) subunit alpha-1 (354 aa).

A lipid anchor (N-myristoyl glycine) is attached at glycine 2. Cysteine 3 carries the S-palmitoyl cysteine lipid modification. The G-alpha domain maps to arginine 32–phenylalanine 354. A G1 motif region spans residues lysine 35–threonine 48. GTP contacts are provided by residues glutamate 43–threonine 48, aspartate 150–serine 151, and leucine 175–arginine 178. Serine 47 contributes to the Mg(2+) binding site. The segment at aspartate 173–threonine 181 is G2 motif. Threonine 181 serves as a coordination point for Mg(2+). The G3 motif stretch occupies residues phenylalanine 196–arginine 205. GTP-binding positions include aspartate 200–glutamine 204, asparagine 269–aspartate 272, and alanine 326. The G4 motif stretch occupies residues isoleucine 265–aspartate 272. The segment at threonine 324–threonine 329 is G5 motif.

This sequence belongs to the G-alpha family. G(i/o/t/z) subfamily. In terms of assembly, heterotrimeric G proteins are composed of 3 units; alpha, beta and gamma. The alpha chain contains the guanine nucleotide binding site. Part of a spindle orientation complex at least composed of GNAI1, GPSM2 and NUMA1. Identified in complex with the beta subunit GNB1 and the gamma subunit GNG1. Identified in complex with the beta subunit GNB1 and the gamma subunit GNG2. Component of the TAS2R14-GNAI1 complex, consisting of TAS2R14, GNAI1, GNB1 and GNG2; within the complex interacts with TAS2R14; this complex plays a role in the perception of bitterness. GTP binding causes dissociation of the heterotrimer, liberating the individual subunits so that they can interact with downstream effector proteins. Interacts (GDP-bound form) with GPSM1; this inhibits guanine nucleotide exchange and GTP binding. Interacts (GDP-bound form) with GPSM2 (via GoLoco domains); this inhibits guanine nucleotide exchange. Interacts with RGS10; this strongly enhances GTP hydrolysis. Interacts with RGS1 and RGS16. Interacts with RGS4. Interacts with RGS12. Interacts (via active GTP- or inactive GDP-bound forms) with RGS14 (via RGS and GoLoco domains). Interacts with RGS3, RGS6, RGS7, RGS8, RGS17, RGS18 and RGS20 (in vitro). Interacts (GDP-bound form) with RIC8A (via C-terminus); promoting GNAI1 folding and association with the plasma membrane. Interacts (inactive GDP-bound form) with NUCB1 (via GBA motif); the interaction leads to activation of GNAI1. Interacts (inactive GDP-bound form) with CCDC88C/DAPLE (via GBA motif); the interaction leads to activation of GNAI1. Interacts (inactive GDP-bound form) with CCDC8A/GIV (via GBA motif). Interacts with GPR15. Post-translationally, myristoylation at Gly-2 is required for membrane anchoring before palmitoylation. In terms of processing, palmitoylation at Cys-3 varies with membrane lipid composition.

The protein resides in the nucleus. It is found in the cytoplasm. The protein localises to the cell membrane. It localises to the cytoskeleton. Its subcellular location is the microtubule organizing center. The protein resides in the centrosome. It is found in the cell cortex. The protein localises to the membrane. It carries out the reaction GTP + H2O = GDP + phosphate + H(+). Guanine nucleotide-binding proteins (G proteins) function as transducers downstream of G protein-coupled receptors (GPCRs) in numerous signaling cascades. The alpha chain contains the guanine nucleotide binding site and alternates between an active, GTP-bound state and an inactive, GDP-bound state. Signaling by an activated GPCR promotes GDP release and GTP binding. The alpha subunit has a low GTPase activity that converts bound GTP to GDP, thereby terminating the signal. Both GDP release and GTP hydrolysis are modulated by numerous regulatory proteins. Signaling is mediated via effector proteins, such as adenylate cyclase. Inhibits adenylate cyclase activity of ADCY1, ADCY5 and ADCY6, leading to decreased intracellular cAMP levels. The inactive GDP-bound form prevents the association of RGS14 with centrosomes and is required for the translocation of RGS14 from the cytoplasm to the plasma membrane. Required for normal cytokinesis during mitosis. Required for cortical dynein-dynactin complex recruitment during metaphase. This Rattus norvegicus (Rat) protein is Guanine nucleotide-binding protein G(i) subunit alpha-1 (Gnai1).